A 125-amino-acid chain; its full sequence is uncharacterized protein (125 aa).

To transposase of insertion sequence IS6501.

This is an uncharacterized protein from Sinorhizobium fredii (strain NBRC 101917 / NGR234).